Reading from the N-terminus, the 874-residue chain is MEVSLCILLFLLHFNEGIHGVRFTQKPFHQTVTQGNMVRLGCAFEGLSEPEIIWMKDGEKLFSTDQMYITLDPYHWETFHSVKSVQQQDAGKYWCEVEYHGAIISSEPAWITVAGVPHFGVEPEDVAAFAGESFNLTCAASGPPEPVEVLWWLGGEQNGDFTPSPSVLFVKGVNESIKFHCEPRNARGISVSRTGTVHIKARPDSLGRTGHHVSDFNITLTWSPGFTGHSQLSTCTIQLSRGPGEVKLPDVVVEVPPFQHVFEGLRSYSNYSVRVRCDNEVGSSPFSPWVDFHTPQAAPSAAPKNFTFDLSEQQLTLSWATLEQEELRGRLQEELRGRLLAYKLQWNQGGESQDPLLFKENVAHLSGAGRFFNATFQVAACTMAGCGPWSQPVLVMPVSAMQAQTQRGHMWVGLLFGLLVATMVGLLLIVLIRNRGKETQFGSAFAAQGAEVPVSFTAARSFNRQFPELPESTLDSLGINSDLKAKLQDVLIFERLLTLGRMLGKGEFGSVREAFLKSENNSGQKVAVKVLKTDINSSSDIEQCLKEAAYMKDFHHPNVIQLIGVSLHRRAQQRLPIPMVILPFMKHGDLHTFLLMSRLGDEPFTVSQQILIQFMLDIARGMEYLSNKNIIHRDLAARNCMLNENMSVCVADFGLSKKIYSGDYYRQGSVSKLPVKWIALESLADNVYTTQSDVWAFGVTMWEIMTRGQTPYPGVENSEIYEYLIKGERLKQPPDCPADIYEIMHSCWSPVPKCRPSFQHLIDQLELLWAKLNPAPVKEPLLYVNLEEEDGEQANSGTRSSEEPSWGVPWQCAGIEEDEKDWLMVSSGAALAIGGDYRYIIGPSVSAIDEESRHSEDGLSEDIREEEEDVIINV.

The signal sequence occupies residues 1–20 (MEVSLCILLFLLHFNEGIHG). 2 Ig-like C2-type domains span residues 21–106 (VRFT…IISS) and 117–198 (PHFG…GTVH). The Extracellular segment spans residues 21–411 (VRFTQKPFHQ…QAQTQRGHMW (391 aa)). The cysteines at positions 42 and 95 are disulfide-linked. N-linked (GlcNAc...) asparagine glycans are attached at residues Asn-135, Asn-174, Asn-217, Asn-270, Asn-305, and Asn-373. Cys-138 and Cys-181 are joined by a disulfide. Fibronectin type-III domains lie at 202-297 (RPDS…TPQA) and 299-403 (PSAA…AMQA). The helical transmembrane segment at 412–432 (VGLLFGLLVATMVGLLLIVLI) threads the bilayer. At 433–874 (RNRGKETQFG…EEEEDVIINV (442 aa)) the chain is on the cytoplasmic side. Residues 497-768 (LTLGRMLGKG…QHLIDQLELL (272 aa)) enclose the Protein kinase domain. ATP is bound by residues 503-511 (LGKGEFGSV) and Lys-529. Asp-634 functions as the Proton acceptor in the catalytic mechanism. A Phosphotyrosine; by autocatalysis modification is found at Tyr-665.

This sequence belongs to the protein kinase superfamily. Tyr protein kinase family. AXL/UFO subfamily.

It localises to the cell membrane. The catalysed reaction is L-tyrosyl-[protein] + ATP = O-phospho-L-tyrosyl-[protein] + ADP + H(+). Functionally, may be involved in cell adhesion processes, particularly in the central nervous system. The sequence is that of Tyrosine-protein kinase receptor TYRO3 (tyro3) from Danio rerio (Zebrafish).